The following is a 389-amino-acid chain: Sulfate adenylyltransferase (389 aa).

The protein belongs to the sulfate adenylyltransferase family.

It catalyses the reaction sulfate + ATP + H(+) = adenosine 5'-phosphosulfate + diphosphate. It functions in the pathway sulfur metabolism; hydrogen sulfide biosynthesis; sulfite from sulfate: step 1/3. This is Sulfate adenylyltransferase from Microcystis aeruginosa (strain NIES-843 / IAM M-2473).